Consider the following 442-residue polypeptide: Myb family transcription factor PHL13 (442 aa).

The HTH myb-type domain maps to 235 to 295; it reads MTSKQRMRWT…HLQKYRTARY (61 aa). The H-T-H motif DNA-binding region spans 266–291; it reads PKAVLKLINSPGLTVYHVKSHLQKYR. Positions 329 to 349 are coiled coil; it reads TEALRLQMKVQKQLHEQLEIQ. An LHEQLE motif is present at residues 342–347; it reads LHEQLE. The segment covering 370–380 has biased composition (basic and acidic residues); it reads QQKMQENKKDS. Residues 370 to 442 are disordered; sequence QQKMQENKKD…TSNRKRVRED (73 aa). The span at 395 to 434 shows a compositional bias: polar residues; that stretch reads SPNLSQPFLHKATNSEPSITQKLQNGSSTMDQSESTSGTS.

This sequence belongs to the MYB-CC family.

The protein resides in the nucleus. The sequence is that of Myb family transcription factor PHL13 from Arabidopsis thaliana (Mouse-ear cress).